Here is a 451-residue protein sequence, read N- to C-terminus: UPF0761 membrane protein Hhal_0704 (451 aa).

6 helical membrane passes run 66-86 (LLAIVPLMTIGFSVLAAFPVF), 122-142 (ELTAVGIAGLTVTALLLLNTI), 162-182 (FMVYWTVLTMGPLLLGVSVAS), 204-224 (LLNLAPFVVQAIVFSLIYSLV), 228-248 (SVPVLHAVIGGVVASGLFELA), and 268-288 (ALAALPIFLVWLYISWLVILI).

This sequence belongs to the UPF0761 family.

The protein resides in the cell inner membrane. The chain is UPF0761 membrane protein Hhal_0704 from Halorhodospira halophila (strain DSM 244 / SL1) (Ectothiorhodospira halophila (strain DSM 244 / SL1)).